Consider the following 182-residue polypeptide: Vacuolar protein sorting-associated protein 29 (182 aa).

At lysine 50 the chain carries N6-acetyllysine.

The protein belongs to the VPS29 family. Component of the commander complex consisting of the CCC subcomplex and the retriever subcomplex. Component of the heterotrimeric retriever complex formed by VPS26C, VPS29 and VPS35L; within the complex interacts with VPS35L. Component of the heterotrimeric retromer cargo-selective complex (CSC), also described as vacuolar protein sorting subcomplex (VPS), formed by VPS26 (VPS26A or VPS26B), VPS29 and VPS35. The CSC has a highly elongated structure with VPS26 and VPS29 binding independently at opposite distal ends of VPS35 as central platform. The CSC is believed to associate with variable sorting nexins to form functionally distinct retromer complex variants. The originally described retromer complex (also called SNX-BAR retromer) is a pentamer containing the CSC and a heterodimeric membrane-deforming subcomplex formed between SNX1 or SNX2 and SNX5 or SNX6 (also called SNX-BAR subcomplex); the respective CSC and SNX-BAR subcomplexes associate with low affinity. The CSC associates with SNX3 to form a SNX3-retromer complex. The CSC associates with SNX27, the WASH complex and the SNX-BAR subcomplex to form the SNX27-retromer complex. Interacts with VPS26A, VPS35, SNX1, SNX2, SNX3, SNX27, WASHC5. Interacts with TBC1D5; this interaction is blocked by VPS35L in the retriever complex. Interacts with SNX17; the interaction is indirect; SNX17 (via its C-terminus) interacts with the retriever complex (via VPS26C and VPS35L). Interacts with VPS26B and ANKRD27.

It localises to the cytoplasm. Its subcellular location is the membrane. It is found in the endosome membrane. The protein localises to the early endosome. The protein resides in the late endosome. Component of the commander complex that is essential for endosomal recycling of transmembrane cargos; the commander complex is composed of the CCC subcomplex and the retriever subcomplex. Component of the retriever complex, which is a heterotrimeric complex related to retromer cargo-selective complex (CSC) and essential for retromer-independent retrieval and recycling of numerous cargos such as integrin alpha-5/beta-1 (ITGA5:ITGB1). Component of the retromer cargo-selective complex (CSC). The CSC is believed to be the core functional component of retromer or respective retromer complex variants acting to prevent missorting of selected transmembrane cargo proteins into the lysosomal degradation pathway. The recruitment of the CSC to the endosomal membrane involves RAB7A and SNX3. The SNX-BAR retromer mediates retrograde transport of cargo proteins from endosomes to the trans-Golgi network (TGN) and is involved in endosome-to-plasma membrane transport for cargo protein recycling. The SNX3-retromer mediates the retrograde endosome-to-TGN transport of WLS distinct from the SNX-BAR retromer pathway. The SNX27-retromer is believed to be involved in endosome-to-plasma membrane trafficking and recycling of a broad spectrum of cargo proteins. The CSC seems to act as recruitment hub for other proteins, such as the WASH complex and TBC1D5. Required to regulate transcytosis of the polymeric immunoglobulin receptor (pIgR-pIgA). In the endosomes, retriever complex drives the retrieval and recycling of NxxY-motif-containing cargo proteins by coupling to SNX17, a cargo essential for the homeostatic maintenance of numerous cell surface proteins associated with processes that include cell migration, cell adhesion, nutrient supply and cell signaling. The recruitment of the retriever complex to the endosomal membrane involves CCC and WASH complexes. Involved in GLUT1 endosome-to-plasma membrane trafficking; the function is dependent of association with ANKRD27. The protein is Vacuolar protein sorting-associated protein 29 of Rattus norvegicus (Rat).